Reading from the N-terminus, the 203-residue chain is CS5 fimbrial subunit (203 aa).

An N-terminal signal peptide occupies residues 1 to 22 (MKKNLLITSVLAMATVSGSVLA).

Its subcellular location is the fimbrium. Major subunit of fimbriae. Fimbriae (also called pili), are polar filaments radiating from the surface of the bacterium to a length of 0.5-1.5 micrometers and numbering 100-300 per cell. They enable bacteria to colonize the epithelium of specific host organs. This is CS5 fimbrial subunit from Escherichia coli.